A 106-amino-acid chain; its full sequence is UPF0213 protein VPA1222 (106 aa).

Residues Q7–Q82 enclose the GIY-YIG domain.

Belongs to the UPF0213 family.

The sequence is that of UPF0213 protein VPA1222 from Vibrio parahaemolyticus serotype O3:K6 (strain RIMD 2210633).